Consider the following 648-residue polypeptide: Beta-glucuronidase (648 aa).

A signal peptide spans 1–22 (MSPRRSVCWFVLGQLLCSCAVA). N-linked (GlcNAc...) asparagine glycans are attached at residues Asn172 and Asn416. The active-site Proton donor is the Glu447. Asn627 is a glycosylation site (N-linked (GlcNAc...) asparagine).

The protein belongs to the glycosyl hydrolase 2 family. As to quaternary structure, homotetramer. Undergoes a post-transcriptional proteolytic cleavage near its C-terminal end, which reduces its size by approximately 3 kDa. The site of this cleavage has as yet not been determined.

It is found in the lysosome. The catalysed reaction is a beta-D-glucuronoside + H2O = D-glucuronate + an alcohol. Its activity is regulated as follows. Inhibited by L-aspartic acid. Functionally, plays an important role in the degradation of dermatan and keratan sulfates. The chain is Beta-glucuronidase (Gusb) from Rattus norvegicus (Rat).